The following is a 586-amino-acid chain: Kinesin-like protein KIF25 (586 aa).

Residues 10 to 94 (SFWEQRTRQL…VIQKLNQDIQ (85 aa)) are a coiled coil. The 393-residue stretch at 173 to 565 (NIRVHCRIRP…LGFGIRARQV (393 aa)) folds into the Kinesin motor domain. 267–274 (GQTGSGKS) serves as a coordination point for ATP. Disordered regions lie at residues 417–460 (TADQ…AGRA) and 564–586 (QVQR…RRPD).

It belongs to the TRAFAC class myosin-kinesin ATPase superfamily. Kinesin family. In terms of assembly, homotetramer.

It localises to the cytoplasm. The protein localises to the cytoskeleton. It is found in the microtubule organizing center. Its subcellular location is the centrosome. Functionally, minus-end microtubule-dependent motor protein. Acts as a negative regulator of centrosome separation required to prevent premature centrosome separation during interphase. Required to maintain a centered nucleus to ensure that the spindle is stably oriented at the onset of mitosis. May also act as a negative regulator of amino acid starvation-induced autophagy. The sequence is that of Kinesin-like protein KIF25 from Macaca fascicularis (Crab-eating macaque).